We begin with the raw amino-acid sequence, 445 residues long: Phosphoglucosamine mutase (445 aa).

Catalysis depends on Ser-102, which acts as the Phosphoserine intermediate. Residues Ser-102, Asp-241, Asp-243, and Asp-245 each coordinate Mg(2+). Ser-102 carries the phosphoserine modification.

Belongs to the phosphohexose mutase family. Mg(2+) serves as cofactor. In terms of processing, activated by phosphorylation.

The catalysed reaction is alpha-D-glucosamine 1-phosphate = D-glucosamine 6-phosphate. Catalyzes the conversion of glucosamine-6-phosphate to glucosamine-1-phosphate. This Rhodococcus opacus (strain B4) protein is Phosphoglucosamine mutase.